A 275-amino-acid chain; its full sequence is Phosphate import ATP-binding protein PstB 1 (275 aa).

The ABC transporter domain maps to 22–261 (IETRDLSVYY…DRTEKIFNSP (240 aa)). 54–61 (GPSGCGKS) contributes to the ATP binding site.

This sequence belongs to the ABC transporter superfamily. Phosphate importer (TC 3.A.1.7) family. As to quaternary structure, the complex is composed of two ATP-binding proteins (PstB), two transmembrane proteins (PstC and PstA) and a solute-binding protein (PstS).

The protein localises to the cell inner membrane. It catalyses the reaction phosphate(out) + ATP + H2O = ADP + 2 phosphate(in) + H(+). Functionally, part of the ABC transporter complex PstSACB involved in phosphate import. Responsible for energy coupling to the transport system. This is Phosphate import ATP-binding protein PstB 1 from Synechococcus sp. (strain JA-3-3Ab) (Cyanobacteria bacterium Yellowstone A-Prime).